The sequence spans 232 residues: Ribonuclease P protein component 3 (232 aa).

The protein belongs to the eukaryotic/archaeal RNase P protein component 3 family. As to quaternary structure, consists of a catalytic RNA component and at least 4-5 protein subunits.

It is found in the cytoplasm. The enzyme catalyses Endonucleolytic cleavage of RNA, removing 5'-extranucleotides from tRNA precursor.. Part of ribonuclease P, a protein complex that generates mature tRNA molecules by cleaving their 5'-ends. The chain is Ribonuclease P protein component 3 from Methanococcus maripaludis (strain C6 / ATCC BAA-1332).